A 360-amino-acid polypeptide reads, in one-letter code: S-adenosylmethionine decarboxylase proenzyme (360 aa).

Residues Glu13 and Glu16 contribute to the active site. Ser73 serves as the catalytic Schiff-base intermediate with substrate; via pyruvic acid. Position 73 is a pyruvic acid (Ser); by autocatalysis (Ser73). Cys87 acts as the Proton donor; for catalytic activity in catalysis. Catalysis depends on proton acceptor; for processing activity residues Ser236 and His249.

The protein belongs to the eukaryotic AdoMetDC family. The cofactor is pyruvate. Is synthesized initially as an inactive proenzyme. Formation of the active enzyme involves a self-maturation process in which the active site pyruvoyl group is generated from an internal serine residue via an autocatalytic post-translational modification. Two non-identical subunits are generated from the proenzyme in this reaction, and the pyruvate is formed at the N-terminus of the alpha chain, which is derived from the carboxyl end of the proenzyme. The post-translation cleavage follows an unusual pathway, termed non-hydrolytic serinolysis, in which the side chain hydroxyl group of the serine supplies its oxygen atom to form the C-terminus of the beta chain, while the remainder of the serine residue undergoes an oxidative deamination to produce ammonia and the pyruvoyl group blocking the N-terminus of the alpha chain. Stolon, also expressed in leaves, stems and roots.

It catalyses the reaction S-adenosyl-L-methionine + H(+) = S-adenosyl 3-(methylsulfanyl)propylamine + CO2. Its pathway is amine and polyamine biosynthesis; S-adenosylmethioninamine biosynthesis; S-adenosylmethioninamine from S-adenosyl-L-methionine: step 1/1. This Solanum tuberosum (Potato) protein is S-adenosylmethionine decarboxylase proenzyme (SAMDC).